A 330-amino-acid polypeptide reads, in one-letter code: Biotin synthase (330 aa).

In terms of domain architecture, Radical SAM core spans 55–282 (NAVQRSTLLS…TAYVRLSAGR (228 aa)). 3 residues coordinate [4Fe-4S] cluster: Cys70, Cys74, and Cys77. [2Fe-2S] cluster-binding residues include Cys114, Cys145, Cys205, and Arg277.

The protein belongs to the radical SAM superfamily. Biotin synthase family. In terms of assembly, homodimer. It depends on [4Fe-4S] cluster as a cofactor. [2Fe-2S] cluster is required as a cofactor.

The enzyme catalyses (4R,5S)-dethiobiotin + (sulfur carrier)-SH + 2 reduced [2Fe-2S]-[ferredoxin] + 2 S-adenosyl-L-methionine = (sulfur carrier)-H + biotin + 2 5'-deoxyadenosine + 2 L-methionine + 2 oxidized [2Fe-2S]-[ferredoxin]. Its pathway is cofactor biosynthesis; biotin biosynthesis; biotin from 7,8-diaminononanoate: step 2/2. Catalyzes the conversion of dethiobiotin (DTB) to biotin by the insertion of a sulfur atom into dethiobiotin via a radical-based mechanism. This chain is Biotin synthase, found in Methylibium petroleiphilum (strain ATCC BAA-1232 / LMG 22953 / PM1).